The following is a 417-amino-acid chain: Putative competence-damage inducible protein (417 aa).

It belongs to the CinA family.

The protein is Putative competence-damage inducible protein of Oceanobacillus iheyensis (strain DSM 14371 / CIP 107618 / JCM 11309 / KCTC 3954 / HTE831).